We begin with the raw amino-acid sequence, 842 residues long: Glycogen phosphorylase, muscle form (842 aa).

The residue at position 2 (Ser-2) is an N-acetylserine. Phosphoserine; by PHK; in form phosphorylase A is present on Ser-15. AMP is bound by residues Asp-43 and Tyr-76. A phosphotyrosine mark is found at Tyr-204 and Tyr-227. Position 310–319 (310–319 (RRFKSSKFGS)) interacts with AMP. Residue Ser-430 is modified to Phosphoserine. The residue at position 473 (Tyr-473) is a Phosphotyrosine. Phosphoserine is present on Ser-514. Lys-681 carries the post-translational modification N6-(pyridoxal phosphate)lysine. A phosphoserine mark is found at Ser-747 and Ser-748.

The protein belongs to the glycogen phosphorylase family. As to quaternary structure, homodimer. Homotetramer; to form the enzymatically active phosphorylase A. It depends on pyridoxal 5'-phosphate as a cofactor. Phosphorylation of Ser-15 converts phosphorylase B (unphosphorylated) to phosphorylase A.

The enzyme catalyses [(1-&gt;4)-alpha-D-glucosyl](n) + phosphate = [(1-&gt;4)-alpha-D-glucosyl](n-1) + alpha-D-glucose 1-phosphate. Its activity is regulated as follows. Allosterically regulated through the non-covalent binding of metabolites, being activated by AMP and inhibited by ATP, ADP, and glucose-6-phosphate. The activity is also controlled by post-translational modifications including phosphorylation. Its function is as follows. Allosteric enzyme that catalyzes the rate-limiting step in glycogen catabolism, the phosphorolytic cleavage of glycogen to produce glucose-1-phosphate, and plays a central role in maintaining cellular and organismal glucose homeostasis. This chain is Glycogen phosphorylase, muscle form, found in Mus musculus (Mouse).